The sequence spans 217 residues: Histone H1C (217 aa).

Composition is skewed to low complexity over residues 1–11 (MAETASTETTP) and 28–45 (KKAA…PSAS). Disordered regions lie at residues 1-45 (MAET…PSAS) and 123-217 (VAKK…AAKK). The region spanning 40-113 (SGPSASELIV…GASGSFKLNK (74 aa)) is the H15 domain. Composition is skewed to basic residues over residues 123–151 (VAKK…KPKK) and 159–217 (SPKK…AAKK).

Belongs to the histone H1/H5 family.

The protein localises to the nucleus. The protein resides in the chromosome. In terms of biological role, histones H1 are necessary for the condensation of nucleosome chains into higher-order structures. In Xenopus laevis (African clawed frog), this protein is Histone H1C.